Here is a 320-residue protein sequence, read N- to C-terminus: Zona pellucida-binding protein 1 (320 aa).

Residues Asn-85 and Asn-158 are each glycosylated (N-linked (GlcNAc...) asparagine).

The protein belongs to the zona pellucida-binding protein Sp38 family.

It is found in the cytoplasmic vesicle. The protein resides in the secretory vesicle. Its subcellular location is the acrosome. It localises to the secreted. The protein localises to the acrosome membrane. Its function is as follows. Plays a role in sperm morphogenesis and in sperm-oocyte interaction during fertilization. The chain is Zona pellucida-binding protein 1 (ZPBP1) from Gallus gallus (Chicken).